The chain runs to 41 residues: uncharacterized protein (41 aa).

A signal peptide spans 1 to 23 (MNFLMRAIFSLLLLFTLSIPVIS).

This is an uncharacterized protein from Escherichia coli (strain K12).